The primary structure comprises 63 residues: Large ribosomal subunit protein uL29 (63 aa).

This sequence belongs to the universal ribosomal protein uL29 family.

This is Large ribosomal subunit protein uL29 (rpmC) from Buchnera aphidicola subsp. Acyrthosiphon kondoi (Acyrthosiphon kondoi symbiotic bacterium).